Reading from the N-terminus, the 655-residue chain is Protein movement modulator (655 aa).

Residues 1–54 (MEQPSILVKILHSIPHVNYTFRRVNDTFNPDSDVYLEPTNNKLQCQQKGIELQS) are Extracellular-facing. N-linked (GlcNAc...) asparagine glycosylation is found at Asn-18 and Asn-25. The chain crosses the membrane as a helical span at residues 55–75 (LVILASIPAGLLIGSLLGLLL). Residues 76–95 (YLLTRCCDRRQRKPSAQRCQ) are Cytoplasmic-facing. Residues 96–116 (SCSLVIITLMTCAAIGLGLYG) form a helical membrane-spanning segment. The Extracellular portion of the chain corresponds to 117 to 231 (NDDFHNGLLQ…GEFYESIRWP (115 aa)). N-linked (GlcNAc...) asparagine glycans are attached at residues Asn-171, Asn-188, and Asn-211. Residues 232–252 (ATLAFLTVLLLLCTVLVIGVA) form a helical membrane-spanning segment. Residues 253-258 (RRSRCT) are Cytoplasmic-facing. A helical membrane pass occupies residues 259–279 (LIFFSVSGLFCIIICWLLAGV). Over 280–401 (YLASSVAAGD…ALRGLCGGGL (122 aa)) the chain is Extracellular. Asn-326 and Asn-372 each carry an N-linked (GlcNAc...) asparagine glycan. Residues 402 to 422 (LGLSLMMVAGLLTSFLLTILV) form a helical membrane-spanning segment. The Cytoplasmic segment spans residues 423–655 (YADSHAWIYL…CKTLESNDFY (233 aa)). The interval 446-576 (APLFPASNAP…NNHYNNTQHR (131 aa)) is disordered. Positions 450–464 (PASNAPSASISPTAP) are enriched in low complexity. The segment covering 465-480 (LSTGTINRTLLHHQQA) has biased composition (polar residues). A compositionally biased stretch (gly residues) spans 482 to 509 (SGGGSGTLPGSGGGAGAGGGVGANGHNG). Low complexity-rich tracts occupy residues 526–539 (SPSS…STAT) and 546–576 (SYHN…TQHR). A phosphoserine mark is found at Ser-597 and Ser-599.

It belongs to the tweety family.

The protein localises to the cell membrane. It catalyses the reaction chloride(in) = chloride(out). Probable large-conductance Ca(2+)-activated chloride channel. Modulator of embryonic movement. The sequence is that of Protein movement modulator from Drosophila melanogaster (Fruit fly).